Consider the following 868-residue polypeptide: DNA mismatch repair protein MutS (868 aa).

620–627 contacts ATP; it reads GPNMGGKS.

It belongs to the DNA mismatch repair MutS family.

Functionally, this protein is involved in the repair of mismatches in DNA. It is possible that it carries out the mismatch recognition step. This protein has a weak ATPase activity. This chain is DNA mismatch repair protein MutS, found in Desulforamulus reducens (strain ATCC BAA-1160 / DSM 100696 / MI-1) (Desulfotomaculum reducens).